Reading from the N-terminus, the 861-residue chain is Protein argonaute-3 (861 aa).

An N-acetylmethionine modification is found at methionine 1. In terms of domain architecture, PAZ spans 230–349 (PVIQFMCEVL…LPLEVCNIVA (120 aa)). Positions 518 to 820 (LIIVILPGKT…VAFRARYHLV (303 aa)) constitute a Piwi domain. Positions 530–567 (YAEVKRVGDTLLGMATQCVQVKNVIKTSPQTLSNLCLK) are interaction with guide RNA. The a divalent metal cation site is built by aspartate 598, glutamate 638, and aspartate 670. Residues 758–806 (QGTSRPSHYHVLWDDNCFTADELQLLTYQPSAHTYVHCTRSVSIPAPAY) form an interaction with guide RNA region. Residue histidine 809 participates in a divalent metal cation binding. A disordered region spans residues 824–847 (RDSAEGSHVSGQSNGRDPQALAKA). At serine 826 the chain carries Phosphoserine.

The protein belongs to the argonaute family. Ago subfamily. As to quaternary structure, interacts with EIF4B, IMP8, PRMT5 and TNRC6B. Interacts with APOBEC3F, APOBEC3G and APOBEC3H. Interacts with EDC4. Post-translationally, ubiquitinated on surface-exposed lysines by a SCF-like E3 ubiquitin-protein ligase complex containing ZSWIM8 during target-directed microRNA degradation (TDMD), a process that mediates degradation of microRNAs (miRNAs). Ubiquitination by the SCF-like E3 ubiquitin-protein ligase complex containing ZSWIM8 leads to its subsequent degradation, thereby exposing miRNAs for degradation. ZSWIM8 recognizes and binds AGO3 when it is engaged with a TDMD target.

It is found in the cytoplasm. The protein localises to the P-body. The catalysed reaction is Endonucleolytic cleavage to 5'-phosphomonoester.. Its function is as follows. Required for RNA-mediated gene silencing (RNAi). Binds to short RNAs such as microRNAs (miRNAs) and represses the translation of mRNAs which are complementary to them. Proposed to be involved in stabilization of small RNA derivates (siRNA) derived from processed RNA polymerase III-transcribed Alu repeats containing a DR2 retinoic acid response element (RARE) in stem cells and in the subsequent siRNA-dependent degradation of a subset of RNA polymerase II-transcribed coding mRNAs by recruiting a mRNA decapping complex involving EDC4. Possesses RNA slicer activity but only on select RNAs bearing 5'- and 3'-flanking sequences to the region of guide-target complementarity. This chain is Protein argonaute-3 (AGO3), found in Bos taurus (Bovine).